Reading from the N-terminus, the 85-residue chain is uncharacterized protein (85 aa).

An N-terminal signal peptide occupies residues 1-35 (MIEDPSKKISLWQKWINVDPKKRILFSLGLFALSA).

It localises to the secreted. This is an uncharacterized protein from Dictyostelium discoideum (Social amoeba).